The sequence spans 141 residues: Large ribosomal subunit protein uL6 (141 aa).

It belongs to the universal ribosomal protein uL6 family.

The protein is Large ribosomal subunit protein uL6 of Haemonchus contortus (Barber pole worm).